We begin with the raw amino-acid sequence, 448 residues long: 26S proteasome regulatory subunit 4 homolog (448 aa).

Positions 1 to 16 (MGQGTPGGMGKQGGAP) are enriched in gly residues. 2 disordered regions span residues 1 to 56 (MGQG…AAAR) and 93 to 112 (LRPTEDKTEEDRSKVDDLRG). 2 stretches are compositionally biased toward basic and acidic residues: residues 17-33 (GDRKPGGDGDKKDRKFE) and 93-111 (LRPTEDKTEEDRSKVDDLR). An ATP-binding site is contributed by 234–241 (GEPGTGKT).

The protein belongs to the AAA ATPase family.

It is found in the cytoplasm. The protein resides in the nucleus. Its function is as follows. The 26S proteasome is involved in the ATP-dependent degradation of ubiquitinated proteins. The regulatory (or ATPase) complex confers ATP dependency and substrate specificity to the 26S complex. This chain is 26S proteasome regulatory subunit 4 homolog (TBP2), found in Oryza sativa subsp. japonica (Rice).